The sequence spans 416 residues: CBL-interacting serine/threonine-protein kinase 21 (416 aa).

A Protein kinase domain is found at Y12 to F264. ATP is bound by residues I18–V26 and K41. D134 serves as the catalytic Proton acceptor. Positions D152 to E178 are activation loop. At S156 the chain carries Phosphoserine. A Phosphothreonine modification is found at T167. In terms of domain architecture, NAF spans A291–E315. Positions R321–E351 are PPI.

It belongs to the protein kinase superfamily. CAMK Ser/Thr protein kinase family. SNF1 subfamily. In terms of assembly, interacts with CBL9. The cofactor is Mn(2+).

It carries out the reaction L-seryl-[protein] + ATP = O-phospho-L-seryl-[protein] + ADP + H(+). It catalyses the reaction L-threonyl-[protein] + ATP = O-phospho-L-threonyl-[protein] + ADP + H(+). CIPK serine-threonine protein kinases interact with CBL proteins. Binding of a CBL protein to the regulatory NAF domain of CIPK protein lead to the activation of the kinase in a calcium-dependent manner. This chain is CBL-interacting serine/threonine-protein kinase 21 (CIPK21), found in Arabidopsis thaliana (Mouse-ear cress).